The primary structure comprises 413 residues: Serine hydroxymethyltransferase (413 aa).

Residues L119 and 123 to 125 (GHL) contribute to the (6S)-5,6,7,8-tetrahydrofolate site. Position 228 is an N6-(pyridoxal phosphate)lysine (K228).

It belongs to the SHMT family. Homodimer. Pyridoxal 5'-phosphate serves as cofactor.

It localises to the cytoplasm. It catalyses the reaction (6R)-5,10-methylene-5,6,7,8-tetrahydrofolate + glycine + H2O = (6S)-5,6,7,8-tetrahydrofolate + L-serine. It functions in the pathway one-carbon metabolism; tetrahydrofolate interconversion. The protein operates within amino-acid biosynthesis; glycine biosynthesis; glycine from L-serine: step 1/1. Functionally, catalyzes the reversible interconversion of serine and glycine with tetrahydrofolate (THF) serving as the one-carbon carrier. This reaction serves as the major source of one-carbon groups required for the biosynthesis of purines, thymidylate, methionine, and other important biomolecules. Also exhibits THF-independent aldolase activity toward beta-hydroxyamino acids, producing glycine and aldehydes, via a retro-aldol mechanism. This chain is Serine hydroxymethyltransferase, found in Caldanaerobacter subterraneus subsp. tengcongensis (strain DSM 15242 / JCM 11007 / NBRC 100824 / MB4) (Thermoanaerobacter tengcongensis).